We begin with the raw amino-acid sequence, 160 residues long: SsrA-binding protein (160 aa).

This sequence belongs to the SmpB family.

It localises to the cytoplasm. Its function is as follows. Required for rescue of stalled ribosomes mediated by trans-translation. Binds to transfer-messenger RNA (tmRNA), required for stable association of tmRNA with ribosomes. tmRNA and SmpB together mimic tRNA shape, replacing the anticodon stem-loop with SmpB. tmRNA is encoded by the ssrA gene; the 2 termini fold to resemble tRNA(Ala) and it encodes a 'tag peptide', a short internal open reading frame. During trans-translation Ala-aminoacylated tmRNA acts like a tRNA, entering the A-site of stalled ribosomes, displacing the stalled mRNA. The ribosome then switches to translate the ORF on the tmRNA; the nascent peptide is terminated with the 'tag peptide' encoded by the tmRNA and targeted for degradation. The ribosome is freed to recommence translation, which seems to be the essential function of trans-translation. The chain is SsrA-binding protein from Sodalis glossinidius (strain morsitans).